Consider the following 498-residue polypeptide: UDP-N-acetylmuramate--L-alanine ligase (498 aa).

Gly-133–Thr-139 lines the ATP pocket.

The protein belongs to the MurCDEF family.

It is found in the cytoplasm. The catalysed reaction is UDP-N-acetyl-alpha-D-muramate + L-alanine + ATP = UDP-N-acetyl-alpha-D-muramoyl-L-alanine + ADP + phosphate + H(+). It participates in cell wall biogenesis; peptidoglycan biosynthesis. Functionally, cell wall formation. The protein is UDP-N-acetylmuramate--L-alanine ligase of Wolbachia pipientis wMel.